The sequence spans 442 residues: Serine--tRNA ligase (442 aa).

249-251 (TSE) serves as a coordination point for L-serine. 280 to 282 (RSE) is a binding site for ATP. E303 is an L-serine binding site. ATP is bound at residue 367-370 (EISS). S402 contributes to the L-serine binding site.

It belongs to the class-II aminoacyl-tRNA synthetase family. Type-1 seryl-tRNA synthetase subfamily. Homodimer. The tRNA molecule binds across the dimer.

The protein resides in the cytoplasm. The catalysed reaction is tRNA(Ser) + L-serine + ATP = L-seryl-tRNA(Ser) + AMP + diphosphate + H(+). It carries out the reaction tRNA(Sec) + L-serine + ATP = L-seryl-tRNA(Sec) + AMP + diphosphate + H(+). The protein operates within aminoacyl-tRNA biosynthesis; selenocysteinyl-tRNA(Sec) biosynthesis; L-seryl-tRNA(Sec) from L-serine and tRNA(Sec): step 1/1. Functionally, catalyzes the attachment of serine to tRNA(Ser). Is also able to aminoacylate tRNA(Sec) with serine, to form the misacylated tRNA L-seryl-tRNA(Sec), which will be further converted into selenocysteinyl-tRNA(Sec). In Acidovorax sp. (strain JS42), this protein is Serine--tRNA ligase.